Reading from the N-terminus, the 801-residue chain is Cadherin-20 (801 aa).

The N-terminal stretch at 1–34 is a signal peptide; it reads MWTSGRMSNAKNWLGLGMSLYFWGLMDLTTTVLS. A propeptide spanning residues 35–59 is cleaved from the precursor; that stretch reads DTPTPQGELEALLSDKPQSHQRTKR. At 60-619 the chain is on the extracellular side; that stretch reads SWVWNQFFVL…AYMLPVSLSR (560 aa). Cadherin domains follow at residues 61-165, 166-274, 275-389, 390-494, and 494-610; these read WVWN…EPKF, LDGP…PPRF, PQKH…PPVF, EPGF…APEF, and FPRF…SPEA. An N-linked (GlcNAc...) asparagine glycan is attached at N261. N420, N461, and N542 each carry an N-linked (GlcNAc...) asparagine glycan. The helical transmembrane segment at 620-640 threads the bilayer; it reads GALIAILACIFVLLVLVLLIL. At 641-801 the chain is on the cytoplasmic side; the sequence is SMRRHRKQPY…GASEGPAPLW (161 aa).

In terms of tissue distribution, expressed in placenta, adult brain, and fetal brain.

Its subcellular location is the cell membrane. Its function is as follows. Cadherins are calcium-dependent cell adhesion proteins. They preferentially interact with themselves in a homophilic manner in connecting cells; cadherins may thus contribute to the sorting of heterogeneous cell types. This Homo sapiens (Human) protein is Cadherin-20 (CDH20).